A 578-amino-acid polypeptide reads, in one-letter code: Arginine--tRNA ligase (578 aa).

A 'HIGH' region motif is present at residues 127–137; the sequence is PNLAKEMHVGH.

The protein belongs to the class-I aminoacyl-tRNA synthetase family. Monomer.

The protein resides in the cytoplasm. It carries out the reaction tRNA(Arg) + L-arginine + ATP = L-arginyl-tRNA(Arg) + AMP + diphosphate. The chain is Arginine--tRNA ligase from Pseudomonas putida (strain GB-1).